The chain runs to 265 residues: Small ribosomal subunit protein eS1 (265 aa).

The disordered stretch occupies residues 234-256 (EGSTTTSKGVTSEGGEKVDRVDG). Over residues 247–256 (GGEKVDRVDG) the composition is skewed to basic and acidic residues.

The protein belongs to the eukaryotic ribosomal protein eS1 family. As to quaternary structure, component of the small ribosomal subunit. Mature ribosomes consist of a small (40S) and a large (60S) subunit. The 40S subunit contains about 33 different proteins and 1 molecule of RNA (18S). The 60S subunit contains about 49 different proteins and 3 molecules of RNA (28S, 5.8S and 5S).

The protein localises to the cytoplasm. The polypeptide is Small ribosomal subunit protein eS1 (Aplysia californica (California sea hare)).